Consider the following 260-residue polypeptide: E3 ubiquitin-protein ligase SRFP1 (260 aa).

The CHY-type zinc-finger motif lies at 11–80 (FGRMGFGCKH…VAQVCYNCGV (70 aa)). Zn(2+) is bound by residues cysteine 18, histidine 20, cysteine 31, cysteine 32, cysteine 38, cysteine 41, histidine 42, histidine 50, cysteine 62, cysteine 65, cysteine 75, cysteine 78, cysteine 87, cysteine 90, histidine 103, cysteine 104, cysteine 107, cysteine 110, histidine 120, cysteine 121, cysteine 124, cysteine 127, histidine 136, and cysteine 138. The CTCHY-type zinc-finger motif lies at 82-146 (MGEYFCSACK…CCIENSMKNN (65 aa)). The segment at 147–190 (CPICYEYLFDSLRETSVLRCGHTMHLQCFHEMLKHDKFSCPICS) adopts an RING-type; atypical zinc-finger fold.

Expressed in roots, leaves, nodes and panicles.

Its subcellular location is the nucleus. It is found in the cytoplasm. It carries out the reaction S-ubiquitinyl-[E2 ubiquitin-conjugating enzyme]-L-cysteine + [acceptor protein]-L-lysine = [E2 ubiquitin-conjugating enzyme]-L-cysteine + N(6)-ubiquitinyl-[acceptor protein]-L-lysine.. It participates in protein modification; protein ubiquitination. Possesses E3 ubiquitin-protein ligase activity in vitro. Possesses transactivation activity in yeast cells. May modulate abiotic stress responses by negatively regulating antioxidant enzymes-mediated reactive oxygen species (ROS) removal. This is E3 ubiquitin-protein ligase SRFP1 from Oryza sativa subsp. japonica (Rice).